We begin with the raw amino-acid sequence, 1677 residues long: ELMO domain-containing protein E (1677 aa).

14 disordered regions span residues 112-139 (TTTS…SSPS), 168-194 (NSKD…SNIK), 264-372 (QLHG…NTTE), 592-625 (DDDN…RSNS), 775-801 (PNSN…STNN), 888-947 (INKN…NQDI), 982-1002 (KIRS…SQPE), 1047-1075 (STNN…ETRS), 1122-1141 (KQKS…GNVS), 1197-1248 (NNNI…DNHA), 1261-1404 (DDDD…RKKR), 1434-1454 (SPGS…PQPE), 1467-1593 (KNPE…GDVS), and 1654-1677 (ESQR…SSSK). 2 stretches are compositionally biased toward low complexity: residues 115–139 (SSSS…SSPS) and 172–194 (TNNS…SNIK). Residues 269–278 (SIGGGGGGSG) show a composition bias toward gly residues. Low complexity-rich tracts occupy residues 307-334 (SQSN…KPNN), 341-352 (TTTTTTTTTTTS), and 597-616 (NNNN…NNYN). In terms of domain architecture, ELMO spans 492 to 710 (SHQILLSDLW…HTREIIEKVC (219 aa)). Gly residues predominate over residues 891-903 (NGGGGGGGGGGGV). The span at 922 to 933 (IDDSDDENDNDE) shows a compositional bias: acidic residues. 2 stretches are compositionally biased toward low complexity: residues 934–946 (VNNN…INQD) and 985–996 (SSSSTPDTSSPP). A coiled-coil region spans residues 1186–1212 (LLDDVLDLNQTNNNIDNENDDINEAII). The segment covering 1228 to 1238 (EEEEEEEEEEE) has biased composition (acidic residues). Over residues 1285-1305 (NNTTTTTTTTTTTTTTTTNTT) the composition is skewed to low complexity. The span at 1306–1334 (GQKRISILSTDTNRPGSSNYGESSLSNGS) shows a compositional bias: polar residues. The span at 1387–1397 (DDEDDEDDDDK) shows a compositional bias: acidic residues. Residues 1445-1454 (PHLSVSPQPE) are compositionally biased toward polar residues. Composition is skewed to low complexity over residues 1475–1488 (LSSS…PLLS), 1503–1574 (SNLI…PSSS), and 1663–1677 (ASSS…SSSK).

This chain is ELMO domain-containing protein E (elmoE), found in Dictyostelium discoideum (Social amoeba).